Reading from the N-terminus, the 143-residue chain is Transcriptional regulator MraZ (143 aa).

2 consecutive SpoVT-AbrB domains span residues 5 to 47 (EFQH…TLTE) and 76 to 119 (AVEV…DRKL).

This sequence belongs to the MraZ family. In terms of assembly, forms oligomers.

It localises to the cytoplasm. It is found in the nucleoid. The sequence is that of Transcriptional regulator MraZ from Macrococcus caseolyticus (strain JCSC5402) (Macrococcoides caseolyticum).